An 88-amino-acid polypeptide reads, in one-letter code: Putative carnobacteriocin-BM1 immunity protein (88 aa).

Its function is as follows. Could impart immunity to carnobacteriocin-BM1 to naturally sensitive host strains. The sequence is that of Putative carnobacteriocin-BM1 immunity protein from Carnobacterium maltaromaticum (Carnobacterium piscicola).